Consider the following 610-residue polypeptide: Elongation factor 4 (610 aa).

A tr-type G domain is found at 11-193 (EKIRNFSIIA…QIVEKVPAPT (183 aa)). GTP-binding positions include 23-28 (DHGKST) and 140-143 (NKID).

This sequence belongs to the TRAFAC class translation factor GTPase superfamily. Classic translation factor GTPase family. LepA subfamily.

It localises to the cell membrane. The catalysed reaction is GTP + H2O = GDP + phosphate + H(+). In terms of biological role, required for accurate and efficient protein synthesis under certain stress conditions. May act as a fidelity factor of the translation reaction, by catalyzing a one-codon backward translocation of tRNAs on improperly translocated ribosomes. Back-translocation proceeds from a post-translocation (POST) complex to a pre-translocation (PRE) complex, thus giving elongation factor G a second chance to translocate the tRNAs correctly. Binds to ribosomes in a GTP-dependent manner. The polypeptide is Elongation factor 4 (Streptococcus pyogenes serotype M3 (strain ATCC BAA-595 / MGAS315)).